The following is a 496-amino-acid chain: Glycerol kinase (496 aa).

Threonine 12 lines the ADP pocket. Residues threonine 12, threonine 13, and serine 14 each contribute to the ATP site. A sn-glycerol 3-phosphate-binding site is contributed by threonine 12. Arginine 16 is an ADP binding site. 3 residues coordinate sn-glycerol 3-phosphate: arginine 82, glutamate 83, and tyrosine 134. Residues arginine 82, glutamate 83, and tyrosine 134 each contribute to the glycerol site. Histidine 230 is modified (phosphohistidine; by HPr). Aspartate 244 contacts sn-glycerol 3-phosphate. Residues aspartate 244 and glutamine 245 each contribute to the glycerol site. Residues threonine 266 and glycine 309 each coordinate ADP. Threonine 266, glycine 309, glutamine 313, and glycine 410 together coordinate ATP. Residues glycine 410 and asparagine 414 each contribute to the ADP site.

Belongs to the FGGY kinase family. As to quaternary structure, homotetramer and homodimer (in equilibrium). The phosphoenolpyruvate-dependent sugar phosphotransferase system (PTS), including enzyme I, and histidine-containing protein (HPr) are required for the phosphorylation, which leads to the activation of the enzyme.

It catalyses the reaction glycerol + ATP = sn-glycerol 3-phosphate + ADP + H(+). The protein operates within polyol metabolism; glycerol degradation via glycerol kinase pathway; sn-glycerol 3-phosphate from glycerol: step 1/1. Activated by phosphorylation and inhibited by fructose 1,6-bisphosphate (FBP). Key enzyme in the regulation of glycerol uptake and metabolism. Catalyzes the phosphorylation of glycerol to yield sn-glycerol 3-phosphate. This is Glycerol kinase from Bacillus licheniformis (strain ATCC 14580 / DSM 13 / JCM 2505 / CCUG 7422 / NBRC 12200 / NCIMB 9375 / NCTC 10341 / NRRL NRS-1264 / Gibson 46).